A 56-amino-acid polypeptide reads, in one-letter code: Large ribosomal subunit protein bL32 (56 aa).

The disordered stretch occupies residues 1–21 (MGVPQRRQSHARKNKRRSEWR). Basic residues predominate over residues 7–19 (RQSHARKNKRRSE).

This sequence belongs to the bacterial ribosomal protein bL32 family.

The polypeptide is Large ribosomal subunit protein bL32 (Syntrophomonas wolfei subsp. wolfei (strain DSM 2245B / Goettingen)).